Reading from the N-terminus, the 444-residue chain is F-box protein At1g53790 (444 aa).

One can recognise an F-box domain in the interval 76–125 (VSCFRYIPIDLLMDIFSRVPAKSIARFRCVSKLWESILCRPDFKELFMTM).

The sequence is that of F-box protein At1g53790 from Arabidopsis thaliana (Mouse-ear cress).